The primary structure comprises 709 residues: Kelch domain-containing protein STK_09390 (709 aa).

Positions M1–A22 are cleaved as a signal peptide. Kelch repeat units lie at residues K49–N94, L96–Y140, K141–S192, A193–G240, M242–G288, and K290–A340. Fibronectin type-III domains lie at P315 to P405, P406 to A488, N489 to I566, and P568 to R643.

This chain is Kelch domain-containing protein STK_09390, found in Sulfurisphaera tokodaii (strain DSM 16993 / JCM 10545 / NBRC 100140 / 7) (Sulfolobus tokodaii).